A 266-amino-acid polypeptide reads, in one-letter code: Signal peptidase I (266 aa).

The Cytoplasmic portion of the chain corresponds to 1-20; sequence MQTDNTKSNTNKTAKQEWGS. A helical membrane pass occupies residues 21–41; that stretch reads FAFVICIALLIRILIMEPFNV. The Extracellular segment spans residues 42-266; sequence PTGSMKATIL…IFRNLYNTDA (225 aa). Residues S45 and K108 contribute to the active site.

This sequence belongs to the peptidase S26 family.

The protein localises to the cell membrane. It catalyses the reaction Cleavage of hydrophobic, N-terminal signal or leader sequences from secreted and periplasmic proteins.. The protein is Signal peptidase I (lepB) of Rickettsia conorii (strain ATCC VR-613 / Malish 7).